Consider the following 161-residue polypeptide: Cytochrome c-type biogenesis protein CcmE (161 aa).

At 1–13 (MSWLPKSPKARRR) the chain is on the cytoplasmic side. Residues 14–34 (LMLVAAIAPVLAVAAGLTLWG) form a helical; Signal-anchor for type II membrane protein membrane-spanning segment. The Periplasmic segment spans residues 35-161 (LSDSISFFYT…QRPEHQGDAL (127 aa)). H128 and Y132 together coordinate heme.

It belongs to the CcmE/CycJ family.

It localises to the cell inner membrane. In terms of biological role, heme chaperone required for the biogenesis of c-type cytochromes. Transiently binds heme delivered by CcmC and transfers the heme to apo-cytochromes in a process facilitated by CcmF and CcmH. The chain is Cytochrome c-type biogenesis protein CcmE from Phenylobacterium zucineum (strain HLK1).